The sequence spans 301 residues: Probable 5-dehydro-4-deoxyglucarate dehydratase (301 aa).

It belongs to the DapA family.

It catalyses the reaction 5-dehydro-4-deoxy-D-glucarate + H(+) = 2,5-dioxopentanoate + CO2 + H2O. The protein operates within carbohydrate acid metabolism; D-glucarate degradation; 2,5-dioxopentanoate from D-glucarate: step 2/2. The chain is Probable 5-dehydro-4-deoxyglucarate dehydratase from Xanthobacter autotrophicus (strain ATCC BAA-1158 / Py2).